Here is a 271-residue protein sequence, read N- to C-terminus: Phosphatidylglycerol--prolipoprotein diacylglyceryl transferase (271 aa).

Transmembrane regions (helical) follow at residues 21–41 (ISVR…MWLA), 60–80 (LLFA…VLFY), 95–115 (VWTG…AMLW), 124–144 (FFGV…VGRL), 176–196 (SQLY…NWFI), 203–223 (GSVS…VEYV), and 230–250 (LGLF…MIIG). Arginine 143 contacts a 1,2-diacyl-sn-glycero-3-phospho-(1'-sn-glycerol).

Belongs to the Lgt family.

It localises to the cell inner membrane. The catalysed reaction is L-cysteinyl-[prolipoprotein] + a 1,2-diacyl-sn-glycero-3-phospho-(1'-sn-glycerol) = an S-1,2-diacyl-sn-glyceryl-L-cysteinyl-[prolipoprotein] + sn-glycerol 1-phosphate + H(+). It functions in the pathway protein modification; lipoprotein biosynthesis (diacylglyceryl transfer). In terms of biological role, catalyzes the transfer of the diacylglyceryl group from phosphatidylglycerol to the sulfhydryl group of the N-terminal cysteine of a prolipoprotein, the first step in the formation of mature lipoproteins. The protein is Phosphatidylglycerol--prolipoprotein diacylglyceryl transferase of Vibrio vulnificus (strain YJ016).